The following is a 233-amino-acid chain: Orotidine 5'-phosphate decarboxylase (233 aa).

Substrate is bound by residues aspartate 11, lysine 34, 61–70, threonine 117, arginine 179, glutamine 188, glycine 208, and arginine 209; that span reads DLKLHDIPNT. Lysine 63 (proton donor) is an active-site residue.

It belongs to the OMP decarboxylase family. Type 1 subfamily. As to quaternary structure, homodimer.

It catalyses the reaction orotidine 5'-phosphate + H(+) = UMP + CO2. It participates in pyrimidine metabolism; UMP biosynthesis via de novo pathway; UMP from orotate: step 2/2. Catalyzes the decarboxylation of orotidine 5'-monophosphate (OMP) to uridine 5'-monophosphate (UMP). This Streptococcus pneumoniae (strain P1031) protein is Orotidine 5'-phosphate decarboxylase.